The primary structure comprises 377 residues: Queuine tRNA-ribosyltransferase (377 aa).

D89 serves as the catalytic Proton acceptor. Substrate is bound by residues 89–93, D143, Q188, and G215; that span reads DSGGF. The RNA binding stretch occupies residues 246–252; sequence GVGKPED. The active-site Nucleophile is the D265. The RNA binding; important for wobble base 34 recognition stretch occupies residues 270-274; the sequence is TRNAR. The Zn(2+) site is built by C303, C305, C308, and H334.

The protein belongs to the queuine tRNA-ribosyltransferase family. Homodimer. Within each dimer, one monomer is responsible for RNA recognition and catalysis, while the other monomer binds to the replacement base PreQ1. Requires Zn(2+) as cofactor.

The catalysed reaction is 7-aminomethyl-7-carbaguanine + guanosine(34) in tRNA = 7-aminomethyl-7-carbaguanosine(34) in tRNA + guanine. Its pathway is tRNA modification; tRNA-queuosine biosynthesis. Catalyzes the base-exchange of a guanine (G) residue with the queuine precursor 7-aminomethyl-7-deazaguanine (PreQ1) at position 34 (anticodon wobble position) in tRNAs with GU(N) anticodons (tRNA-Asp, -Asn, -His and -Tyr). Catalysis occurs through a double-displacement mechanism. The nucleophile active site attacks the C1' of nucleotide 34 to detach the guanine base from the RNA, forming a covalent enzyme-RNA intermediate. The proton acceptor active site deprotonates the incoming PreQ1, allowing a nucleophilic attack on the C1' of the ribose to form the product. After dissociation, two additional enzymatic reactions on the tRNA convert PreQ1 to queuine (Q), resulting in the hypermodified nucleoside queuosine (7-(((4,5-cis-dihydroxy-2-cyclopenten-1-yl)amino)methyl)-7-deazaguanosine). This Acinetobacter baumannii (strain AB307-0294) protein is Queuine tRNA-ribosyltransferase.